The sequence spans 448 residues: Glucose-6-phosphate isomerase (448 aa).

Glu-290 serves as the catalytic Proton donor. Residues His-311 and Lys-425 contribute to the active site.

Belongs to the GPI family.

Its subcellular location is the cytoplasm. The catalysed reaction is alpha-D-glucose 6-phosphate = beta-D-fructose 6-phosphate. The protein operates within carbohydrate biosynthesis; gluconeogenesis. Its pathway is carbohydrate degradation; glycolysis; D-glyceraldehyde 3-phosphate and glycerone phosphate from D-glucose: step 2/4. Catalyzes the reversible isomerization of glucose-6-phosphate to fructose-6-phosphate. The polypeptide is Glucose-6-phosphate isomerase (Lactococcus lactis subsp. lactis (strain IL1403) (Streptococcus lactis)).